We begin with the raw amino-acid sequence, 40 residues long: Photosystem II reaction center protein J (40 aa).

A helical transmembrane segment spans residues 8–28 (IPLWLVALVAGTGVLVVVGLF).

The protein belongs to the PsbJ family. In terms of assembly, PSII is composed of 1 copy each of membrane proteins PsbA, PsbB, PsbC, PsbD, PsbE, PsbF, PsbH, PsbI, PsbJ, PsbK, PsbL, PsbM, PsbT, PsbX, PsbY, PsbZ, Psb30/Ycf12, peripheral proteins PsbO, CyanoQ (PsbQ), PsbU, PsbV and a large number of cofactors. It forms dimeric complexes.

It localises to the cellular thylakoid membrane. Its function is as follows. One of the components of the core complex of photosystem II (PSII). PSII is a light-driven water:plastoquinone oxidoreductase that uses light energy to abstract electrons from H(2)O, generating O(2) and a proton gradient subsequently used for ATP formation. It consists of a core antenna complex that captures photons, and an electron transfer chain that converts photonic excitation into a charge separation. This is Photosystem II reaction center protein J from Trichodesmium erythraeum (strain IMS101).